A 487-amino-acid chain; its full sequence is Sodium-coupled neutral amino acid symporter 1 (487 aa).

Residues 1 to 74 are Cytoplasmic-facing; the sequence is MMHFKSGLEL…EYIPGTTSLG (74 aa). A Phosphoserine modification is found at Ser6. Thr11 is modified (phosphothreonine). A phosphoserine mark is found at Ser25, Ser28, Ser49, and Ser52. Thr54 is subject to Phosphothreonine. Phosphoserine is present on Ser56. Residues 75-97 form a helical membrane-spanning segment; sequence MSVFNLSNAIMGSGILGLAFALA. Residues 98-112 lie on the Extracellular side of the membrane; the sequence is NTGILLFLVLLTSVT. A helical transmembrane segment spans residues 113 to 133; that stretch reads LLSIYSINLLLICSKETGCMV. The Cytoplasmic portion of the chain corresponds to 134 to 147; that stretch reads YEKLGEQVFGTTGK. Residues 148 to 168 form a helical membrane-spanning segment; that stretch reads FVIFGATSLQNTGAMLSYLFI. The Extracellular segment spans residues 169–188; sequence VKNELPSAIKFLMGKEETFS. Residues 189–211 form a helical membrane-spanning segment; the sequence is AWYVDGRVLVVIVTFGIILPLCL. Over 212 to 216 the chain is Cytoplasmic; it reads LKNLG. Residues 217–237 form a helical membrane-spanning segment; the sequence is YLGYTSGFSLSCMVFFLIVVI. Residues 238 to 275 lie on the Extracellular side of the membrane; it reads YKKFQIPCIVPELNSTISANSTNADTCTPKYVTLNSKT. Cys245 and Cys264 are disulfide-bonded. Residues Asn251 and Asn257 are each glycosylated (N-linked (GlcNAc...) asparagine). Residues 276–296 form a helical membrane-spanning segment; the sequence is VYALPTIAFAFVCHPSVLPIY. The Cytoplasmic portion of the chain corresponds to 297 to 312; it reads SELKDRSQKKMQMVSN. The helical transmembrane segment at 313-333 threads the bilayer; the sequence is ISFFAMFVMYFLTAIFGYLTF. Residues 334–350 are Extracellular-facing; it reads YDNVQSDLLHKYQGKDD. The helical transmembrane segment at 351–371 threads the bilayer; the sequence is ILILTVRLAVIVAVILTVPVL. The Cytoplasmic segment spans residues 372–393; the sequence is FFTVRSSLFELAKKTKFNLCRH. The helical transmembrane segment at 394 to 414 threads the bilayer; it reads TVVTCILLVVINLLVISIPSM. The Extracellular segment spans residues 415–416; it reads KD. Residues 417–437 form a helical membrane-spanning segment; sequence IFGVVGVTSANMLIFILPSSL. Residues 438–452 are Cytoplasmic-facing; that stretch reads YLKITDQDGDKGTQR. The chain crosses the membrane as a helical span at residues 453-473; the sequence is IWAALFLGLGVLFSLVSIPLV. Topologically, residues 474–487 are extracellular; it reads IYDWACSSSSDEGH.

Belongs to the amino acid/polyamine transporter 2 family. In terms of processing, N-glycosylation plays an important role in the L-glutamine transport.

The protein localises to the cell membrane. The catalysed reaction is L-glutamine(in) + Na(+)(in) = L-glutamine(out) + Na(+)(out). It carries out the reaction L-alanine(in) + Na(+)(in) = L-alanine(out) + Na(+)(out). It catalyses the reaction L-asparagine(in) + Na(+)(in) = L-asparagine(out) + Na(+)(out). The enzyme catalyses L-histidine(in) + Na(+)(in) = L-histidine(out) + Na(+)(out). The catalysed reaction is L-serine(in) + Na(+)(in) = L-serine(out) + Na(+)(out). It carries out the reaction L-cysteine(in) + Na(+)(in) = L-cysteine(out) + Na(+)(out). It catalyses the reaction L-methionine(in) + Na(+)(in) = L-methionine(out) + Na(+)(out). The enzyme catalyses glycine(in) + Na(+)(in) = glycine(out) + Na(+)(out). The catalysed reaction is L-threonine(in) + Na(+)(in) = L-threonine(out) + Na(+)(out). It carries out the reaction L-proline(in) + Na(+)(in) = L-proline(out) + Na(+)(out). Its activity is regulated as follows. Inhibited by alpha-(methylamino)isobutyric acid (MeAIB). Inhibited by lithium, potassium, choline ions, N-methylglucamine. The pH dependence has an allosteric effect on the transport. Functionally, symporter that cotransports short-chain neutral amino acids and sodium ions from the extraccellular to the intracellular side of the cell membrane. The transport is elctrogenic, pH dependent and driven by the Na(+) electrochemical gradient. Participates in the astroglia-derived glutamine transport into GABAergic interneurons for neurotransmitter GABA de novo synthesis. May also contributes to amino acid transport in placental trophoblast. Regulates synaptic plasticity. This Pongo abelii (Sumatran orangutan) protein is Sodium-coupled neutral amino acid symporter 1.